The primary structure comprises 594 residues: Jacalin-related lectin 44 (594 aa).

A disordered region spans residues 1-23 (MIQKLGAKGIKSDERNQREWDDG). Jacalin-type lectin domains are found at residues 2–148 (IQKL…YFIS), 151–293 (PTRL…YFST), 296–441 (PNKL…YYRP), and 448–588 (VKRL…HVIP). The span at 10–23 (IKSDERNQREWDDG) shows a compositional bias: basic and acidic residues.

This sequence belongs to the jacalin lectin family.

The sequence is that of Jacalin-related lectin 44 (JAL44) from Arabidopsis thaliana (Mouse-ear cress).